Here is a 399-residue protein sequence, read N- to C-terminus: Guanine nucleotide-binding protein G(f) subunit alpha (399 aa).

Residues Thr-46–Phe-399 form the G-alpha domain. A G1 motif region spans residues Lys-49–Thr-62. Residues Gly-54–Thr-61, Leu-188–Thr-194, Asp-221–Gln-225, Asn-290–Asp-293, and Ala-371 each bind GTP. The segment at Asp-186–Thr-194 is G2 motif. Position 194 (Thr-194) interacts with Mg(2+). The tract at residues Phe-217–Arg-226 is G3 motif. Residues Ile-286–Asp-293 are G4 motif. The segment at Thr-369–Thr-374 is G5 motif.

It belongs to the G-alpha family. In terms of assembly, g proteins are composed of 3 units; alpha, beta and gamma. The alpha chain contains the guanine nucleotide binding site. As to expression, during embryogenesis, expressed primarily in the developing gut and transiently in the amnioserosa.

Functionally, guanine nucleotide-binding proteins (G proteins) are involved as modulators or transducers in various transmembrane signaling systems. The polypeptide is Guanine nucleotide-binding protein G(f) subunit alpha (Galphaf) (Drosophila melanogaster (Fruit fly)).